The following is a 431-amino-acid chain: Hydroxylamine reductase (431 aa).

Cysteine 5, cysteine 8, cysteine 17, and cysteine 23 together coordinate [4Fe-4S] cluster. Residues histidine 131, glutamate 155, cysteine 199, cysteine 286, cysteine 314, cysteine 339, glutamate 373, and lysine 375 each coordinate hybrid [4Fe-2O-2S] cluster. A Cysteine persulfide modification is found at cysteine 286.

The protein belongs to the HCP family. Requires [4Fe-4S] cluster as cofactor. Hybrid [4Fe-2O-2S] cluster serves as cofactor.

The protein localises to the cytoplasm. The catalysed reaction is A + NH4(+) + H2O = hydroxylamine + AH2 + H(+). In terms of biological role, catalyzes the reduction of hydroxylamine to form NH(3) and H(2)O. The sequence is that of Hydroxylamine reductase from Thermotoga petrophila (strain ATCC BAA-488 / DSM 13995 / JCM 10881 / RKU-1).